Here is a 764-residue protein sequence, read N- to C-terminus: Semaphorin-3D (764 aa).

Residues 1–41 (MKTAGEPDRRRQRRQVRTGRFSCAWWSTSVMLFFSLPEGNC) form the signal peptide. The Sema domain maps to 48–535 (RVKLGYKDLI…GSDGLVQVSL (488 aa)). Cys-121 and Cys-132 are joined by a disulfide. Asn-143 is a glycosylation site (N-linked (GlcNAc...) asparagine). Disulfide bonds link Cys-150–Cys-159, Cys-290–Cys-402, and Cys-314–Cys-362. The N-linked (GlcNAc...) asparagine glycan is linked to Asn-490. A disulfide bridge links Cys-538 with Cys-556. N-linked (GlcNAc...) asparagine glycosylation is present at Asn-610. Positions 661–740 (GDAGSYFCTS…EYCETMWHRE (80 aa)) constitute an Ig-like C2-type domain. Cys-668 and Cys-733 are joined by a disulfide. A disordered region spans residues 743–764 (QKQKGKWKHVQELRKSRNRRHH).

The protein belongs to the semaphorin family.

It localises to the secreted. Functionally, may play a role in the guidance of several axon pathways. This Danio rerio (Zebrafish) protein is Semaphorin-3D (sema3d).